Reading from the N-terminus, the 331-residue chain is MKKPVVIGLAVVVLAAVVAGGYWWYQSRQDNGLTLYGNVDIRTVNLSFRVGGRVESLAVDEGDAIKAGQVLGELDHKPYEIALMQAKAGVSVAQAQYDLMLAGYRDEEIAQAAAAVKQAQAAYDYAQNFYNRQQGLWKSRTISANDLENARSSRDQAQATLKSAQDKLRQYRSGNREQDIAQAKASLEQAQAQLAQAELNLQDSTLIAPSDGTLLTRAVEPGTVLNEGGTVFTVSLTRPVWVRAYVDERNLDQAQPGRKVLLYTDGRPDKPYHGQIGFVSPTAEFTPKTVETPDLRTDLVYRLRIVVTDADDALRQGMPVTVQFGDEAGHE.

A signal peptide spans 1 to 15; the sequence is MKKPVVIGLAVVVLA. Residues 107 to 208 adopt a coiled-coil conformation; the sequence is EEIAQAAAAV…LNLQDSTLIA (102 aa).

The protein belongs to the UPF0194 family.

It localises to the periplasm. This is UPF0194 membrane protein YbhG from Escherichia coli O157:H7 (strain EC4115 / EHEC).